The sequence spans 198 residues: Large ribosomal subunit protein bL25 (198 aa).

Belongs to the bacterial ribosomal protein bL25 family. CTC subfamily. In terms of assembly, part of the 50S ribosomal subunit; part of the 5S rRNA/L5/L18/L25 subcomplex. Contacts the 5S rRNA. Binds to the 5S rRNA independently of L5 and L18.

In terms of biological role, this is one of the proteins that binds to the 5S RNA in the ribosome where it forms part of the central protuberance. This is Large ribosomal subunit protein bL25 from Pseudomonas putida (strain W619).